The chain runs to 126 residues: Phosphoribosyl-ATP pyrophosphatase (126 aa).

The protein belongs to the PRA-PH family.

It localises to the cytoplasm. The catalysed reaction is 1-(5-phospho-beta-D-ribosyl)-ATP + H2O = 1-(5-phospho-beta-D-ribosyl)-5'-AMP + diphosphate + H(+). It participates in amino-acid biosynthesis; L-histidine biosynthesis; L-histidine from 5-phospho-alpha-D-ribose 1-diphosphate: step 2/9. The chain is Phosphoribosyl-ATP pyrophosphatase from Variovorax paradoxus (strain S110).